We begin with the raw amino-acid sequence, 101 residues long: uncharacterized protein (101 aa).

2 helical membrane-spanning segments follow: residues 35–55 (LWTM…LIII) and 66–86 (FLFF…TLLF).

It is found in the membrane. This is an uncharacterized protein from Saccharomyces cerevisiae (strain ATCC 204508 / S288c) (Baker's yeast).